Consider the following 450-residue polypeptide: MEQDKYLTVAAITKYIEKKFEVDPYMKQVFVRGEISNLKQPASGHLYFTVKDEFAMLRSVMFQKAVQKIGFVPEDGMNVLITGRIGVFTKAGRYQFYAEHMEPDGVGALYIQLEQLKSQLEKEGLFAEAHKKVLPSFPSKVAVVTSKTGAAVRDILTTIHRRMPSVEVIVYPTVVQGDKAAQRIVENIGRINQRNDIDVMIIGRGGGSLEELWAFNEEPVVRAVYDSDVPVISAVGHETDFALSDFSADVRAATPTAAAELAVPDYRDLEERLAERKYRLLAVTRQLLERKERALEQLKQHLILNGPKHQLEQQMERTDYFAERLKNAFSKQVLLKQTTFNRLNDRLHYYHPKKEIALQKEQIILRKQALDKAMKQQLKDKQQAFIRQVEALEHLSPLALLKRGFGVTYKAGELVKTVQELEIGDNIQVKMQGGHIDAHITAKEEDTSGN.

The protein belongs to the XseA family. Heterooligomer composed of large and small subunits.

Its subcellular location is the cytoplasm. The catalysed reaction is Exonucleolytic cleavage in either 5'- to 3'- or 3'- to 5'-direction to yield nucleoside 5'-phosphates.. Bidirectionally degrades single-stranded DNA into large acid-insoluble oligonucleotides, which are then degraded further into small acid-soluble oligonucleotides. The polypeptide is Exodeoxyribonuclease 7 large subunit (Listeria innocua serovar 6a (strain ATCC BAA-680 / CLIP 11262)).